Consider the following 520-residue polypeptide: Vacuolar protein sorting-associated protein 9A (520 aa).

Positions 102-246 (VIADEKLFQK…ISNIDAKSIS (145 aa)) constitute a VPS9 domain. Residues asparagine 180 and aspartate 185 each coordinate GTP. Disordered stretches follow at residues 267 to 331 (DSQT…AESI), 396 to 433 (LAPS…ETDR), and 464 to 520 (LVEG…EASE). Over residues 287–323 (LQKTQSLNPKRENTLFQSKSSDSLSGTNELLNINSET) the composition is skewed to polar residues. Position 330 is a phosphoserine (serine 330). Residues 396–407 (LAPSSSPLQASS) are compositionally biased toward low complexity. Basic and acidic residues-rich tracts occupy residues 413 to 433 (KESE…ETDR) and 464 to 497 (LVEG…REGD).

Homodimer. The homodimer interacts with RABF2B. Interacts with RABF1 and RABF2A. In terms of tissue distribution, widely expressed.

Functionally, functions as a guanine nucleotide exchange factor (GEF) for Rab small GTPases. Activates specifically RABF1, RABF2A and RABF2B proteins. Required for early stages of embryogenesis, cytokinesis, embryogenesis, and organ development. Is essential for the establishment or maintenance of the polar localization of the auxin efflux carrier PIN1. In Arabidopsis thaliana (Mouse-ear cress), this protein is Vacuolar protein sorting-associated protein 9A.